The chain runs to 601 residues: tRNA 5-methylaminomethyl-2-thiouridine biosynthesis bifunctional protein MnmC (601 aa).

The tRNA (mnm(5)s(2)U34)-methyltransferase stretch occupies residues 1-237 (MSDPTASPLI…KKQRLEAVAP (237 aa)). The tract at residues 252–601 (IGGGIAGAAM…FSSRVATGAV (350 aa)) is FAD-dependent cmnm(5)s(2)U34 oxidoreductase.

The protein in the N-terminal section; belongs to the methyltransferase superfamily. tRNA (mnm(5)s(2)U34)-methyltransferase family. It in the C-terminal section; belongs to the DAO family. Requires FAD as cofactor.

Its subcellular location is the cytoplasm. The catalysed reaction is 5-aminomethyl-2-thiouridine(34) in tRNA + S-adenosyl-L-methionine = 5-methylaminomethyl-2-thiouridine(34) in tRNA + S-adenosyl-L-homocysteine + H(+). Catalyzes the last two steps in the biosynthesis of 5-methylaminomethyl-2-thiouridine (mnm(5)s(2)U) at the wobble position (U34) in tRNA. Catalyzes the FAD-dependent demodification of cmnm(5)s(2)U34 to nm(5)s(2)U34, followed by the transfer of a methyl group from S-adenosyl-L-methionine to nm(5)s(2)U34, to form mnm(5)s(2)U34. The protein is tRNA 5-methylaminomethyl-2-thiouridine biosynthesis bifunctional protein MnmC of Caulobacter sp. (strain K31).